A 308-amino-acid polypeptide reads, in one-letter code: D-alanine--D-alanine ligase (308 aa).

The 201-residue stretch at Lys-102–Glu-302 folds into the ATP-grasp domain. Residue Pro-128–Thr-183 coordinates ATP. Mg(2+) contacts are provided by Asp-252, Glu-269, and Asn-271.

The protein belongs to the D-alanine--D-alanine ligase family. Mg(2+) serves as cofactor. Requires Mn(2+) as cofactor.

It localises to the cytoplasm. The enzyme catalyses 2 D-alanine + ATP = D-alanyl-D-alanine + ADP + phosphate + H(+). Its pathway is cell wall biogenesis; peptidoglycan biosynthesis. Its function is as follows. Cell wall formation. The chain is D-alanine--D-alanine ligase from Chelativorans sp. (strain BNC1).